We begin with the raw amino-acid sequence, 216 residues long: Peroxiredoxin (216 aa).

The region spanning 2–158 is the Thioredoxin domain; that stretch reads VVIGEKFPEV…ILRLVKALKI (157 aa). The active-site Cysteine sulfenic acid (-SOH) intermediate is cysteine 46. Arginine 121 is a substrate binding site. The cysteines at positions 205 and 211 are disulfide-linked.

This sequence belongs to the peroxiredoxin family. Prx6 subfamily. In terms of assembly, homodecamer. Pentamer of dimers that assemble into a ring structure.

The protein localises to the cytoplasm. It carries out the reaction a hydroperoxide + [thioredoxin]-dithiol = an alcohol + [thioredoxin]-disulfide + H2O. In terms of biological role, thiol-specific peroxidase that catalyzes the reduction of hydrogen peroxide and organic hydroperoxides to water and alcohols, respectively. Plays a role in cell protection against oxidative stress by detoxifying peroxides. The polypeptide is Peroxiredoxin (ahpC) (Pyrococcus horikoshii (strain ATCC 700860 / DSM 12428 / JCM 9974 / NBRC 100139 / OT-3)).